The primary structure comprises 232 residues: (S)-2-haloacid dehalogenase (232 aa).

Residue aspartate 10 is the Nucleophile of the active site. Residues 11-12 (LY), arginine 41, and 118-119 (SN) contribute to the an (S)-2-haloacid site. The tract at residues 175-180 (SSNAWD) is important for catalytic activity.

The protein belongs to the HAD-like hydrolase superfamily. S-2-haloalkanoic acid dehalogenase family. Homodimer.

It catalyses the reaction an (S)-2-haloacid + H2O = a (2R)-2-hydroxycarboxylate + a halide anion + H(+). The catalysed reaction is (S)-2-chloropropanoate + H2O = (R)-lactate + chloride + H(+). Functionally, catalyzes the hydrolytic dehalogenation of small (S)-2-haloalkanoic acids to yield the corresponding (R)-2-hydroxyalkanoic acids. Acts on acids of short chain lengths, C(2) to C(4), with inversion of configuration at C-2. Active with 2-halogenated carboxylic acids and converts only the S-isomer (or L-isomer) of 2-chloropropionic acid with inversion of configuration to produce R-lactate (or D-isomer). The chain is (S)-2-haloacid dehalogenase from Pseudomonas sp. (strain YL).